We begin with the raw amino-acid sequence, 1068 residues long: Target of Nesh-SH3 (1068 aa).

The signal sequence occupies residues 1 to 21 (MLSSLGCLLLCGSITLALGNA). N-linked (GlcNAc...) asparagine glycosylation occurs at N37. Residues 116–214 (KPLQLVVGTL…KIFNHKTVVG (99 aa)) enclose the Fibronectin type-III 1 domain. Disordered regions lie at residues 315–351 (SKTP…DVSE) and 384–811 (VFSS…SITD). The segment covering 326–339 (RPTTVTPETVPRST) has biased composition (low complexity). The span at 340 to 351 (KPTTSSALDVSE) shows a compositional bias: polar residues. Over residues 447–462 (QPTTPAPQQTTSIPST) the composition is skewed to low complexity. Basic residues predominate over residues 463–473 (PKRRPRPKPPR). The segment covering 482-499 (AGTITPKISKSPEPTWTT) has biased composition (polar residues). A compositionally biased stretch (pro residues) spans 532-544 (RAPPKPKTSPRPR). Positions 562 to 574 (PKTSPSPEVSYTT) are enriched in polar residues. 2 stretches are compositionally biased toward low complexity: residues 603-631 (IPFI…STQE) and 737-750 (PPLR…GTPL). The span at 802 to 811 (PDNSPCSITD) shows a compositional bias: polar residues. Residues 833–926 (PPTNLTVVTV…NTVAFSTESA (94 aa)) enclose the Fibronectin type-III 2 domain.

As to quaternary structure, probably interacts with ABI3. In terms of tissue distribution, expressed in brain, heart, lung, liver, pancreas kidney and placenta.

Its subcellular location is the secreted. This Homo sapiens (Human) protein is Target of Nesh-SH3.